The following is a 428-amino-acid chain: Chaperone SurA (428 aa).

Residues 1–19 (MNIWKTLLLGMLVTGSAVS) form the signal peptide. PpiC domains follow at residues 170–268 (SVEY…KIED) and 277–377 (VTEV…EVLD).

The protein resides in the periplasm. It catalyses the reaction [protein]-peptidylproline (omega=180) = [protein]-peptidylproline (omega=0). Chaperone involved in the correct folding and assembly of outer membrane proteins. Recognizes specific patterns of aromatic residues and the orientation of their side chains, which are found more frequently in integral outer membrane proteins. May act in both early periplasmic and late outer membrane-associated steps of protein maturation. The chain is Chaperone SurA from Vibrio vulnificus (strain CMCP6).